A 220-amino-acid chain; its full sequence is Fibroblast growth factor 3 (220 aa).

The signal sequence occupies residues 1-19; that stretch reads MLVIWLLLLALLPEPRVPA. A disordered region spans residues 19 to 40; the sequence is AATASPRAPRDAGGRGGVYEHL. N-linked (GlcNAc...) asparagine glycosylation occurs at N66.

The protein belongs to the heparin-binding growth factors family.

It localises to the secreted. Plays an important role in the regulation of embryonic development, cell proliferation, and cell differentiation. The chain is Fibroblast growth factor 3 (FGF3) from Gallus gallus (Chicken).